The sequence spans 216 residues: MSSEHDTPGEALRLSSTDIRILGSLIEKQATSPETYPLTLNALVIACNQKTSREPVMNLTQGQVGQSLRALEARGFTRLVMGSRADRWEQRLDKALELVPAQLILCGLMFLRGPQTVNELLTRSGRMHDFEDSEQVLHQLERLIARGLALHIPRQAGQREDRYTHALGDPADIEAILAARSNPVERSAGGAVSVERIEELEARIAALEERLAQLEG.

The protein belongs to the UPF0502 family.

The sequence is that of UPF0502 protein PFL_4004 from Pseudomonas fluorescens (strain ATCC BAA-477 / NRRL B-23932 / Pf-5).